Reading from the N-terminus, the 1235-residue chain is ATP-dependent helicase/nuclease subunit A (1235 aa).

The region spanning 10–482 is the UvrD-like helicase ATP-binding domain; it reads SIWTDDQWSA…IDLNQNFRSR (473 aa). 31 to 38 provides a ligand contact to ATP; it reads AAAGSGKT. Positions 509–799 constitute a UvrD-like helicase C-terminal domain; that stretch reads QAALKLGASY…RLMTIHSSKG (291 aa).

Belongs to the helicase family. AddA subfamily. Heterodimer of AddA and AddB/RexB. Mg(2+) serves as cofactor.

It carries out the reaction Couples ATP hydrolysis with the unwinding of duplex DNA by translocating in the 3'-5' direction.. The catalysed reaction is ATP + H2O = ADP + phosphate + H(+). The heterodimer acts as both an ATP-dependent DNA helicase and an ATP-dependent, dual-direction single-stranded exonuclease. Recognizes the chi site generating a DNA molecule suitable for the initiation of homologous recombination. The AddA nuclease domain is required for chi fragment generation; this subunit has the helicase and 3' -&gt; 5' nuclease activities. The protein is ATP-dependent helicase/nuclease subunit A of Bacillus velezensis (strain DSM 23117 / BGSC 10A6 / LMG 26770 / FZB42) (Bacillus amyloliquefaciens subsp. plantarum).